Here is a 401-residue protein sequence, read N- to C-terminus: L-rhamnonate dehydratase (401 aa).

H29 and R55 together coordinate substrate. Mg(2+) is bound by residues D222, E248, and E276. H325 acts as the Proton acceptor in catalysis. E345 contacts substrate.

The protein belongs to the mandelate racemase/muconate lactonizing enzyme family. RhamD subfamily. Homooctamer; tetramer of dimers. The cofactor is Mg(2+).

It carries out the reaction L-rhamnonate = 2-dehydro-3-deoxy-L-rhamnonate + H2O. Catalyzes the dehydration of L-rhamnonate to 2-keto-3-deoxy-L-rhamnonate (KDR). Can also dehydrate L-lyxonate, L-mannonate and D-gulonate, although less efficiently, but not 2-keto-4-hydroxyheptane-1,7-dioate. The polypeptide is L-rhamnonate dehydratase (rhmD) (Escherichia coli (strain K12)).